The chain runs to 336 residues: Holliday junction branch migration complex subunit RuvB (336 aa).

The interval 4-184 is large ATPase domain (RuvB-L); the sequence is ADRLISASGG…FGIVQRLEFY (181 aa). ATP contacts are provided by residues isoleucine 23, arginine 24, glycine 65, lysine 68, threonine 69, threonine 70, 131–133, arginine 174, tyrosine 184, and arginine 221; that span reads EDY. Position 69 (threonine 69) interacts with Mg(2+). Residues 185–255 form a small ATPAse domain (RuvB-S) region; that stretch reads NVKDLTDIVA…IAARAMDMLD (71 aa). The interval 258–336 is head domain (RuvB-H); sequence NEGFDFMDRK…HFGLQRPDEG (79 aa). The DNA site is built by arginine 313 and arginine 318.

It belongs to the RuvB family. As to quaternary structure, homohexamer. Forms an RuvA(8)-RuvB(12)-Holliday junction (HJ) complex. HJ DNA is sandwiched between 2 RuvA tetramers; dsDNA enters through RuvA and exits via RuvB. An RuvB hexamer assembles on each DNA strand where it exits the tetramer. Each RuvB hexamer is contacted by two RuvA subunits (via domain III) on 2 adjacent RuvB subunits; this complex drives branch migration. In the full resolvosome a probable DNA-RuvA(4)-RuvB(12)-RuvC(2) complex forms which resolves the HJ.

The protein resides in the cytoplasm. It catalyses the reaction ATP + H2O = ADP + phosphate + H(+). In terms of biological role, the RuvA-RuvB-RuvC complex processes Holliday junction (HJ) DNA during genetic recombination and DNA repair, while the RuvA-RuvB complex plays an important role in the rescue of blocked DNA replication forks via replication fork reversal (RFR). RuvA specifically binds to HJ cruciform DNA, conferring on it an open structure. The RuvB hexamer acts as an ATP-dependent pump, pulling dsDNA into and through the RuvAB complex. RuvB forms 2 homohexamers on either side of HJ DNA bound by 1 or 2 RuvA tetramers; 4 subunits per hexamer contact DNA at a time. Coordinated motions by a converter formed by DNA-disengaged RuvB subunits stimulates ATP hydrolysis and nucleotide exchange. Immobilization of the converter enables RuvB to convert the ATP-contained energy into a lever motion, pulling 2 nucleotides of DNA out of the RuvA tetramer per ATP hydrolyzed, thus driving DNA branch migration. The RuvB motors rotate together with the DNA substrate, which together with the progressing nucleotide cycle form the mechanistic basis for DNA recombination by continuous HJ branch migration. Branch migration allows RuvC to scan DNA until it finds its consensus sequence, where it cleaves and resolves cruciform DNA. This is Holliday junction branch migration complex subunit RuvB from Aeromonas hydrophila subsp. hydrophila (strain ATCC 7966 / DSM 30187 / BCRC 13018 / CCUG 14551 / JCM 1027 / KCTC 2358 / NCIMB 9240 / NCTC 8049).